The following is a 23-amino-acid chain: ENFAGGCATGFLRTADGRCKPTF.

C7 and C19 are joined by a disulfide.

It belongs to the GBP/PSP1/paralytic peptide family. As to expression, hemolymph.

Causes rapid, rigid paralysis when injected into Lepidopteran larvae. The physiological role may be to reduce hemolymph loss following injury and promote wound healing. This is Paralytic peptide 2 from Manduca sexta (Tobacco hawkmoth).